A 447-amino-acid polypeptide reads, in one-letter code: Protein CLT1, chloroplastic (447 aa).

A chloroplast-targeting transit peptide spans 1–48; sequence MATTSSDRLIAGLTASIGSIESRYANPAQSVSLICRNQINGAPPIVLR. 10 consecutive transmembrane segments (helical) span residues 103–123, 135–155, 172–192, 200–220, 228–248, 256–276, 304–324, 351–371, 387–407, and 413–433; these read MEIVIAAATTAALGVGNRVLY, FFLAQLSTFGYVAVYFSILYF, LPFLIVGVLESLALAAGMAAA, TTVLSQTFLVWQILFSIIFLG, ILGCTLVAFGVIVSVASGSGA, GILWSLLMVFSFLLQGADTVM, IFQVICIALLLPFLSKLWGIP, GAPLLPVMFVMMNMAYNISLL, TVSVPIAVYCFTLPLPYLGVA, and GFVAGTIILVVGMLLYAWTPS.

It belongs to the CRT-like transporter family.

The protein localises to the plastid. The protein resides in the chloroplast membrane. Its function is as follows. Involved in thiol transport from the plastid to the cytosol. Transports probably both glutathione (GSH) and its precursor, gamma-glutamylcysteine (gamma-EC). Exhibits some functional redundancy with CLT3 in maintaining the root GSH pool. This Arabidopsis thaliana (Mouse-ear cress) protein is Protein CLT1, chloroplastic.